We begin with the raw amino-acid sequence, 406 residues long: Cholinephosphotransferase 1 (406 aa).

Alanine 2 is modified (N-acetylalanine). The Cytoplasmic segment spans residues 2 to 62; it reads AAGAGAGSAP…LLQWIPLWMA (61 aa). A helical membrane pass occupies residues 63–83; sequence PNSITLLGLAVNVVTTLVLIS. A CDP-choline-binding site is contributed by asparagine 64. Topologically, residues 84–93 are lumenal; the sequence is YCPTATEEAP. Residues 94-118 form a helical membrane-spanning segment; the sequence is YWTYLLCALGLFIYQSLDAIDGKQA. Residues aspartate 111 and aspartate 114 each coordinate Mg(2+). Arginine 119 lines the CDP-choline pocket. At 119–125 the chain is on the cytoplasmic side; sequence RRTNSCS. A helical membrane pass occupies residues 126 to 150; the sequence is PLGELFDHGCDSLSTVFMAVGASIA. Residue aspartate 132 participates in Mg(2+) binding. The active-site Proton acceptor is histidine 133. Aspartate 136 contacts Mg(2+). The Lumenal segment spans residues 151 to 160; that stretch reads ARLGTYPDWF. Residues 161 to 179 form a helical membrane-spanning segment; the sequence is FFCSFIGMFVFYCAHWQTY. The Cytoplasmic portion of the chain corresponds to 180–190; sequence VSGMLRFGKVD. The helical transmembrane segment at 191-207 threads the bilayer; the sequence is VTEIQIALVIVFVLSAF. At 208 to 222 the chain is on the lumenal side; that stretch reads GGATMWDYTIPILEI. A helical transmembrane segment spans residues 223 to 248; it reads KLKILPVLGFLGGVIFSCSNYFHVIL. Residues 249–265 lie on the Cytoplasmic side of the membrane; sequence HGGVGKNGSTIAGTSVL. The chain crosses the membrane as a helical span at residues 266–281; that stretch reads SPGLHIGLIIILAIMI. At 282 to 293 the chain is on the lumenal side; that stretch reads YKKSATDVFEKH. A helical membrane pass occupies residues 294–316; that stretch reads PCLYILMFGCVFAKVSQKLVVAH. The Cytoplasmic segment spans residues 317–329; the sequence is MTKSELYLQDTVF. The chain crosses the membrane as a helical span at residues 330 to 339; it reads LGPGLLFLDQ. Topologically, residues 340–346 are lumenal; the sequence is YFNNFID. A helical membrane pass occupies residues 347 to 376; it reads EYVVLWMAMVISSFDMVIYFSALCLQISRH. Residues 377 to 406 are Cytoplasmic-facing; it reads LHLNIFKTACHQAPEQVQVLSSKSHQNNMD.

It belongs to the CDP-alcohol phosphatidyltransferase class-I family. It depends on Mg(2+) as a cofactor. Requires Mn(2+) as cofactor. In terms of tissue distribution, highly expressed in testis, colon, small intestine, heart, prostate and spleen. Also detected in kidney, skeletal muscle, pancreas, leukocytes, ovary and thymus. Weakly expressed in the brain, placenta and lung. Overexpressed in cancerous breast epithelial cell lines.

The protein resides in the golgi apparatus membrane. It carries out the reaction CDP-choline + a 1,2-diacyl-sn-glycerol = a 1,2-diacyl-sn-glycero-3-phosphocholine + CMP + H(+). It catalyses the reaction 1-octadecanoyl-2-(5Z,8Z,11Z,14Z-eicosatetraenoyl)-sn-glycerol + CDP-choline = 1-octadecanoyl-2-(5Z,8Z,11Z,14Z-eicosatetraenoyl)-sn-glycero-3-phosphocholine + CMP + H(+). The catalysed reaction is 1-hexadecanoyl-2-(9Z-octadecenoyl)-sn-glycerol + CDP-choline = 1-hexadecanoyl-2-(9Z-octadecenoyl)-sn-glycero-3-phosphocholine + CMP + H(+). The enzyme catalyses 1-hexadecanoyl-2-(4Z,7Z,10Z,13Z,16Z,19Z-docosahexaenoyl)-sn-glycerol + CDP-choline = 1-hexadecanoyl-2-(4Z,7Z,10Z,13Z,16Z,19Z-docosahexaenoyl)-sn-glycero-3-phosphocholine + CMP + H(+). It carries out the reaction 1,2-dioctanoyl-sn-glycerol + CDP-choline = 1,2-dioctanoyl-sn-glycero-3-phosphocholine + CMP + H(+). The protein operates within phospholipid metabolism; phosphatidylcholine biosynthesis; phosphatidylcholine from phosphocholine: step 2/2. Its function is as follows. Catalyzes the final step of de novo phosphatidylcholine (PC) synthesis, i.e. the transfer of choline phosphate from CDP-choline to the free hydroxyl of a diacylglycerol (DAG), producing a PC. It thereby plays a central role in the formation and maintenance of vesicular membranes. The polypeptide is Cholinephosphotransferase 1 (Homo sapiens (Human)).